The following is a 130-amino-acid chain: Holo-[acyl-carrier-protein] synthase (130 aa).

Residues Asp8 and Glu62 each coordinate Mg(2+).

This sequence belongs to the P-Pant transferase superfamily. AcpS family. Mg(2+) is required as a cofactor.

It localises to the cytoplasm. It catalyses the reaction apo-[ACP] + CoA = holo-[ACP] + adenosine 3',5'-bisphosphate + H(+). Transfers the 4'-phosphopantetheine moiety from coenzyme A to a Ser of acyl-carrier-protein. This is Holo-[acyl-carrier-protein] synthase from Acidovorax ebreus (strain TPSY) (Diaphorobacter sp. (strain TPSY)).